Consider the following 529-residue polypeptide: Peptide chain release factor 3 (529 aa).

In terms of domain architecture, tr-type G spans 7–275 (EQRRTFGIIS…AVVELAPSPR (269 aa)). GTP is bound by residues 16 to 23 (SHPDAGKT), 84 to 88 (DTPGH), and 138 to 141 (NKLD).

The protein belongs to the TRAFAC class translation factor GTPase superfamily. Classic translation factor GTPase family. PrfC subfamily.

It localises to the cytoplasm. Functionally, increases the formation of ribosomal termination complexes and stimulates activities of RF-1 and RF-2. It binds guanine nucleotides and has strong preference for UGA stop codons. It may interact directly with the ribosome. The stimulation of RF-1 and RF-2 is significantly reduced by GTP and GDP, but not by GMP. The protein is Peptide chain release factor 3 of Syntrophus aciditrophicus (strain SB).